Reading from the N-terminus, the 988-residue chain is MSSSITMSEPRLNWDVTPKNGLKAFFSPENYKDHSMAPSLKELYILSNRRIGENLSVSASSVENEPAVSSATQAKEKVGMILLPKPRVPYPRFSRFSQREQRTYVDLLAKYAKLPSSSKTVGTNTNEYLQYLDMKKHVNEEVNEFLKFLQNSAKKCAQDYNMLSDEARLFTEQLLRACIEQVKKYPEFYTLHEVTSLMGFFPFKTEMGLKLEKTLLVLGSAKFVKTAFPSMPVKLQLSKEDMSSIETPQQKAEVMHCDISKDPNAEKLVSRYHPQIALTSQALFTLLNNHGPSYKEQWEIPVCVEMIAVEGSKPVKVIYINSPLPRKQMTMRERNQIFHEVPLKHIISKNTSVPVSAVFMDKPEEYTSEVDMPTEAGECRKIETLENLDMDFDGDVTELETFGVTTTSPPRSPSSESDSSAPLMTDVHAVPKIAAVPLAPATPVAPTMPVAPATPVTPTMPMAPATPEASATPNITDDSRSLCQILMKQLQKEKQLFSGVEGGPEGCKNKDDQGLEPCGEEVPSANAKSLTQDNEVHRTEGISKESDVGVLCTNDERQGGQGNANNPNNTATASEAAESEKGIPCGSDTDEDCLIIDTESRSCDGKTADLGSRPNSSAQASAGNQATTTVSEESCVLKKPIKRVYKKFDPVGEILKMQDELLKPVSRKVPELPLTNSEESKQPPASEQPSAALDAAPWPKSSWPSAFQKPKGRLPYELQDYVEDTSEYIAPQEGNFVYKLFSLQDLLLLVRCSIQRVETRPRSKKRKKIRRQFPVYVLPKVEYQGCYGVEALTESELCRFWTESLLHSNCSFYVGHIDAFTSKLFMLEEIASEELKEKLAALKISSLFNILQHILKKLCSLQEGSYLLSHAAEDSSLLIYKTSDGKVTRTAYNLHKAHCDLPGVPSSLSVPWVPLDPSYLLPYHIHHGRVPCTFPPKPLRPAAQAKVGGTRMPTRNHRNPVSMETKSSCLPVQQVENEGVARNKRKIM.

Phosphoserine is present on Ser-322. Disordered regions lie at residues 402 to 422 (FGVT…SSAP) and 500 to 587 (VEGG…PCGS). Low complexity predominate over residues 413–422 (PSSESDSSAP). Basic and acidic residues predominate over residues 534 to 547 (NEVHRTEGISKESD). Positions 563 to 576 (NANNPNNTATASEA) are enriched in low complexity. Ser-587 is subject to Phosphoserine. Thr-589 bears the Phosphothreonine mark. Disordered stretches follow at residues 604-633 (DGKT…VSEE), 673-706 (PLTN…WPSA), and 942-968 (AAQA…TKSS). Over residues 615 to 629 (NSSAQASAGNQATTT) the composition is skewed to low complexity.

It belongs to the ICE2 family. In terms of assembly, component of the little elongation complex (LEC), at least composed of ELL (ELL, ELL2 or ELL3), ZC3H8, ICE1 and ICE2. Interacts with ICE1 (via C-terminus domain). Interacts with ELL. As to expression, expressed in brain, kidney, liver and testis.

The protein localises to the nucleus. Component of the little elongation complex (LEC), a complex required to regulate small nuclear RNA (snRNA) gene transcription by RNA polymerase II and III. This chain is Little elongation complex subunit 2 (Ice2), found in Mus musculus (Mouse).